A 565-amino-acid chain; its full sequence is Augmin complex subunit dgt3 (565 aa).

Coiled-coil stretches lie at residues 135–171 (ELQL…AKKA) and 212–241 (QDYD…IQFY).

It belongs to the HAUS3 family. Component of the augmin complex composed of dgt2, dgt3, dgt4, dgt5, dgt6, msd1, msd5 and wac. The complex interacts directly or indirectly with microtubules and is required for centrosome-independent generation of spindle microtubules.

Its subcellular location is the cytoplasm. The protein localises to the cytoskeleton. It localises to the spindle. As part of the augmin complex, plays a role in centrosome-independent generation of spindle microtubules. The complex is required for mitotic spindle assembly through its involvement in localizing gamma-tubulin to spindle microtubules. In Drosophila melanogaster (Fruit fly), this protein is Augmin complex subunit dgt3.